The following is a 1052-amino-acid chain: Kinesin-like protein KIF11 (1052 aa).

Residues 17-358 (NIQVVVRCRP…LEYAHRAKNI (342 aa)) form the Kinesin motor domain. 104 to 111 (GQTGTGKT) is an ATP binding site. Lysine 145 is modified (N6-acetyllysine). Residues 364–478 (VNQKLTKKAL…ETKLQLVKEE (115 aa)) are a coiled coil. The residue at position 457 (threonine 457) is a Phosphothreonine. Lysine 476 participates in a covalent cross-link: Glycyl lysine isopeptide (Lys-Gly) (interchain with G-Cter in SUMO2). Threonine 925 is subject to Phosphothreonine. Disordered stretches follow at residues 950-1026 (LQKK…LNPV) and 1033-1052 (EASDLSISKSRLPLHTSINL). Positions 963 to 988 (EASKETSQDMDEEREALEQCTEELVS) form a coiled coil. Residues 1016-1026 (KDKENRGLNPV) show a composition bias toward basic and acidic residues.

Belongs to the TRAFAC class myosin-kinesin ATPase superfamily. Kinesin family. BimC subfamily. In terms of assembly, interacts with the thyroid hormone receptor in the presence of thyroid hormone. Component of a large chromatin remodeling complex, at least composed of MYSM1, PCAF, RBM10 and KIF11/TRIP5. Interacts with RARRES1 and AGBL2. Phosphorylated exclusively on serine during S phase, but on both serine and Thr-925 during mitosis, so controlling the association of KIF11 with the spindle apparatus (probably during early prophase).

It localises to the cytoplasm. The protein localises to the cytoskeleton. Its subcellular location is the spindle pole. Its function is as follows. Motor protein required for establishing a bipolar spindle during mitosis. Required in non-mitotic cells for transport of secretory proteins from the Golgi complex to the cell surface. This Mus musculus (Mouse) protein is Kinesin-like protein KIF11 (Kif11).